Reading from the N-terminus, the 450-residue chain is Phosphoglucosamine mutase (450 aa).

Residue S107 is the Phosphoserine intermediate of the active site. Residues S107, D246, D248, and D250 each coordinate Mg(2+). S107 carries the post-translational modification Phosphoserine.

Belongs to the phosphohexose mutase family. Mg(2+) serves as cofactor. Post-translationally, activated by phosphorylation.

It catalyses the reaction alpha-D-glucosamine 1-phosphate = D-glucosamine 6-phosphate. In terms of biological role, catalyzes the conversion of glucosamine-6-phosphate to glucosamine-1-phosphate. The sequence is that of Phosphoglucosamine mutase from Aromatoleum aromaticum (strain DSM 19018 / LMG 30748 / EbN1) (Azoarcus sp. (strain EbN1)).